Consider the following 154-residue polypeptide: 3-hydroxyacyl-[acyl-carrier-protein] dehydratase FabZ (154 aa).

Residue His60 is part of the active site.

This sequence belongs to the thioester dehydratase family. FabZ subfamily.

It is found in the cytoplasm. It catalyses the reaction a (3R)-hydroxyacyl-[ACP] = a (2E)-enoyl-[ACP] + H2O. Functionally, involved in unsaturated fatty acids biosynthesis. Catalyzes the dehydration of short chain beta-hydroxyacyl-ACPs and long chain saturated and unsaturated beta-hydroxyacyl-ACPs. This chain is 3-hydroxyacyl-[acyl-carrier-protein] dehydratase FabZ, found in Haemophilus ducreyi (strain 35000HP / ATCC 700724).